We begin with the raw amino-acid sequence, 174 residues long: MGSILQFVLIIITINITYVTLTTIRFILMIKGMRVYASLLSVLEVFIYIMGLSIILDNLDSYWNIAAYCCGYGVGVYLGSRIEERLALGYIMAQVIVECEYQGLAGELRDAGFGVTSWLGEGKTGPRMVMMVLAKRNRQKELLNRIDSLCSNAFVIFEEPKNFRGGFWAKKVLH.

3 consecutive transmembrane segments (helical) span residues 4 to 24 (ILQF…LTTI), 35 to 55 (VYAS…LSII), and 59 to 79 (LDSY…VYLG).

Belongs to the UPF0316 family.

The protein localises to the cell membrane. The protein is UPF0316 protein Dhaf_3052 of Desulfitobacterium hafniense (strain DSM 10664 / DCB-2).